Here is a 204-residue protein sequence, read N- to C-terminus: 3-isopropylmalate dehydratase small subunit (204 aa).

The protein belongs to the LeuD family. LeuD type 1 subfamily. Heterodimer of LeuC and LeuD.

The enzyme catalyses (2R,3S)-3-isopropylmalate = (2S)-2-isopropylmalate. Its pathway is amino-acid biosynthesis; L-leucine biosynthesis; L-leucine from 3-methyl-2-oxobutanoate: step 2/4. In terms of biological role, catalyzes the isomerization between 2-isopropylmalate and 3-isopropylmalate, via the formation of 2-isopropylmaleate. The sequence is that of 3-isopropylmalate dehydratase small subunit from Clavibacter michiganensis subsp. michiganensis (strain NCPPB 382).